The primary structure comprises 241 residues: DNA repair protein RecO (241 aa).

Belongs to the RecO family.

Its function is as follows. Involved in DNA repair and RecF pathway recombination. This chain is DNA repair protein RecO, found in Roseobacter denitrificans (strain ATCC 33942 / OCh 114) (Erythrobacter sp. (strain OCh 114)).